We begin with the raw amino-acid sequence, 1323 residues long: Tetratricopeptide repeat protein 21 homolog (1323 aa).

17 TPR repeats span residues 56 to 89 (VPLA…QNFS), 411 to 444 (ESPF…LIEM), 580 to 613 (SLYH…PKKE), 667 to 700 (HQLV…QSNF), 702 to 735 (LSRI…EPTP), 736 to 768 (GSYS…QSKD), 770 to 802 (QLAE…YKDK), 804 to 835 (MRLK…EPEP), 845 to 878 (IQFL…HNKI), 892 to 925 (ARIC…YETD), 927 to 959 (KSNL…DPHN), 961 to 993 (EANL…NPLH), 995 to 1027 (HALF…NPRC), 1031 to 1064 (AGYS…PNVV), 1203 to 1236 (EKCW…NCNS), 1238 to 1270 (RAFE…TNQK), and 1272 to 1305 (CSFG…NPQY).

It belongs to the TTC21 family.

This is Tetratricopeptide repeat protein 21 homolog from Caenorhabditis briggsae.